The primary structure comprises 887 residues: Integrator complex subunit 6 (887 aa).

The VWFA domain maps to 3–227; it reads ILLFLIDTSA…QCLESLVQKV (225 aa). The Inhibitory loop motif lies at 626-633; the sequence is MMIDEADE. The residue at position 804 (S804) is a Phosphoserine.

It belongs to the Integrator subunit 6 family. In terms of assembly, component of the Integrator complex, composed of core subunits INTS1, INTS2, INTS3, INTS4, INTS5, INTS6, INTS7, INTS8, INTS9/RC74, INTS10, INTS11/CPSF3L, INTS12, INTS13, INTS14 and INTS15. The core complex associates with protein phosphatase 2A subunits PPP2CA and PPP2R1A, to form the Integrator-PP2A (INTAC) complex. Widely expressed. Expressed in heart, brain, placenta, lung, liver, skeletal muscle, kidney and pancreas.

The protein localises to the nucleus. The protein resides in the chromosome. In terms of biological role, component of the integrator complex, a multiprotein complex that terminates RNA polymerase II (Pol II) transcription in the promoter-proximal region of genes. The integrator complex provides a quality checkpoint during transcription elongation by driving premature transcription termination of transcripts that are unfavorably configured for transcriptional elongation: the complex terminates transcription by (1) catalyzing dephosphorylation of the C-terminal domain (CTD) of Pol II subunit POLR2A and SUPT5H/SPT5, (2) degrading the exiting nascent RNA transcript via endonuclease activity and (3) promoting the release of Pol II from bound DNA. The integrator complex is also involved in terminating the synthesis of non-coding Pol II transcripts, such as enhancer RNAs (eRNAs), small nuclear RNAs (snRNAs), telomerase RNAs and long non-coding RNAs (lncRNAs). Within the integrator complex, INTS6 acts as a molecular adapter that promotes assembly of protein phosphatase 2A (PP2A) subunits to the integrator core complex, promoting recruitment of PP2A to transcription pause-release checkpoint. Mediates recruitment of cytoplasmic dynein to the nuclear envelope, probably as component of the integrator complex. May have a tumor suppressor role; an ectopic expression suppressing tumor cell growth. The sequence is that of Integrator complex subunit 6 from Homo sapiens (Human).